A 240-amino-acid polypeptide reads, in one-letter code: 3-dehydroquinate dehydratase (240 aa).

3-dehydroquinate contacts are provided by residues serine 15, 42–44, and arginine 73; that span reads EWR. Histidine 132 serves as the catalytic Proton donor/acceptor. The Schiff-base intermediate with substrate role is filled by lysine 160. Residues arginine 202, serine 221, and glutamine 225 each contribute to the 3-dehydroquinate site.

The protein belongs to the type-I 3-dehydroquinase family. In terms of assembly, homodimer.

It carries out the reaction 3-dehydroquinate = 3-dehydroshikimate + H2O. It functions in the pathway metabolic intermediate biosynthesis; chorismate biosynthesis; chorismate from D-erythrose 4-phosphate and phosphoenolpyruvate: step 3/7. Functionally, involved in the third step of the chorismate pathway, which leads to the biosynthesis of aromatic amino acids. Catalyzes the cis-dehydration of 3-dehydroquinate (DHQ) and introduces the first double bond of the aromatic ring to yield 3-dehydroshikimate. The sequence is that of 3-dehydroquinate dehydratase from Latilactobacillus sakei subsp. sakei (strain 23K) (Lactobacillus sakei subsp. sakei).